Here is a 442-residue protein sequence, read N- to C-terminus: Tubulin beta chain (442 aa).

8 residues coordinate GTP: Gln11, Glu69, Ser138, Gly142, Thr143, Gly144, Asn204, and Asn226. Mg(2+) is bound at residue Glu69. Residues 421–442 (EYQQYQDATAEDEEEMDEEQME) are disordered. The span at 429–442 (TAEDEEEMDEEQME) shows a compositional bias: acidic residues.

It belongs to the tubulin family. Dimer of alpha and beta chains. A typical microtubule is a hollow water-filled tube with an outer diameter of 25 nm and an inner diameter of 15 nM. Alpha-beta heterodimers associate head-to-tail to form protofilaments running lengthwise along the microtubule wall with the beta-tubulin subunit facing the microtubule plus end conferring a structural polarity. Microtubules usually have 13 protofilaments but different protofilament numbers can be found in some organisms and specialized cells. It depends on Mg(2+) as a cofactor.

The protein resides in the cytoplasm. It is found in the cytoskeleton. Its function is as follows. Tubulin is the major constituent of microtubules, a cylinder consisting of laterally associated linear protofilaments composed of alpha- and beta-tubulin heterodimers. Microtubules grow by the addition of GTP-tubulin dimers to the microtubule end, where a stabilizing cap forms. Below the cap, tubulin dimers are in GDP-bound state, owing to GTPase activity of alpha-tubulin. This chain is Tubulin beta chain (TUBB1), found in Stylonychia lemnae (Ciliate).